The primary structure comprises 237 residues: Arginine-binding periplasmic protein (237 aa).

The N-terminal stretch at 1–18 (MKKTLLTLLFGCVVTAQA) is a signal peptide.

It belongs to the bacterial solute-binding protein 3 family.

The protein localises to the periplasm. Functionally, binds arginine; part of the arginine periplasmic transport system. The sequence is that of Arginine-binding periplasmic protein (lapT) from Mannheimia haemolytica (Pasteurella haemolytica).